The following is a 104-amino-acid chain: Inner membrane protein YjcH (104 aa).

The Cytoplasmic portion of the chain corresponds to 1-24 (MNGTIYQRIEDNAHFRELVEKRQR). Residues 25-47 (FATILSIIMLAVYIGFILLIAFA) traverse the membrane as a helical segment. The Periplasmic portion of the chain corresponds to 48–61 (PGWLGTPLNPNTSV). A helical membrane pass occupies residues 62-84 (TRGIPIGVGVIVISFVLTGIYIW). At 85–104 (RANGEFDRLNNEVLHEVQAS) the chain is on the cytoplasmic side.

The protein resides in the cell inner membrane. This chain is Inner membrane protein YjcH (yjcH), found in Escherichia coli (strain K12).